The chain runs to 898 residues: Metalloprotease StcE (898 aa).

Positions 1–35 (MNTKMNERWRTPMKLKYLSCTILAPLAIGVFSATA) are cleaved as a signal peptide. The 256-residue stretch at 296-551 (ELLLHTIDIG…QRFFENKAVF (256 aa)) folds into the Peptidase M66 domain. Position 446 (His-446) interacts with Zn(2+). Glu-447 is a catalytic residue. Zn(2+) contacts are provided by His-450 and His-456.

Zn(2+) is required as a cofactor.

The protein localises to the secreted. Its activity is regulated as follows. Inhibited by divalent cation chelators such as BPS and EDTA. Virulence factor that contributes to intimate adherence of enterohemorrhagic E.coli (EHEC) O157:H7 to host cells. Is able to cleave the secreted human mucin 7 (MUC7) and the glycoprotein 340 (DMBT1/GP340). Also cleaves human C1 inhibitor (SERPING1), a regulator of multiple inflammatory pathways, and binds and localizes it to bacterial and host cell surfaces, protecting them from complement-mediated lysis. Therefore, the current model proposes two roles for StcE during infection: it acts first as a mucinase, allowing passage of EHEC through the oral cavity by cleaving the salivary glycoproteins that are responsible for bacterial aggregation. Similarly, in the colon, StcE cleaves the glycoproteins that protect the intestinal epithelial surface, allowing EHEC to come into close contact with host cell membranes. Secondly, it acts as an anti-inflammatory agent by localizing SERPING1 to cell membranes. This is Metalloprotease StcE (stcE) from Escherichia coli O157:H7.